The sequence spans 216 residues: Protein fmp32, mitochondrial (216 aa).

A coiled-coil region spans residues 111 to 133 (RQEMVALHSQVEQLFSDVERLKT). A helical membrane pass occupies residues 193 to 215 (TLQWVFGIVTGSGALLLAYVRLI).

Belongs to the CCDC90 family.

The protein localises to the mitochondrion. Its subcellular location is the membrane. The sequence is that of Protein fmp32, mitochondrial (fmp32) from Schizosaccharomyces pombe (strain 972 / ATCC 24843) (Fission yeast).